The sequence spans 427 residues: Enolase (427 aa).

Q163 provides a ligand contact to (2R)-2-phosphoglycerate. The active-site Proton donor is E205. D242, E285, and D312 together coordinate Mg(2+). 4 residues coordinate (2R)-2-phosphoglycerate: K337, R366, S367, and K388. K337 acts as the Proton acceptor in catalysis.

The protein belongs to the enolase family. Mg(2+) is required as a cofactor.

It is found in the cytoplasm. It localises to the secreted. Its subcellular location is the cell surface. The catalysed reaction is (2R)-2-phosphoglycerate = phosphoenolpyruvate + H2O. It participates in carbohydrate degradation; glycolysis; pyruvate from D-glyceraldehyde 3-phosphate: step 4/5. Functionally, catalyzes the reversible conversion of 2-phosphoglycerate (2-PG) into phosphoenolpyruvate (PEP). It is essential for the degradation of carbohydrates via glycolysis. The sequence is that of Enolase from Burkholderia multivorans (strain ATCC 17616 / 249).